The following is a 300-amino-acid chain: Spermatogenesis-associated serine-rich protein 1 (300 aa).

The segment covering 1–10 (MSPSMLTGNS) has biased composition (polar residues). 2 disordered regions span residues 1-42 (MSPS…MTEV) and 64-91 (TPSG…LPRV). The span at 27–42 (QLEKVPEKRDSGMTEV) shows a compositional bias: basic and acidic residues. A compositionally biased stretch (low complexity) spans 64–85 (TPSGKSVSSSSSVETGPSVSEP). Phosphoserine is present on Ser113.

In Homo sapiens (Human), this protein is Spermatogenesis-associated serine-rich protein 1 (SPATS1).